A 313-amino-acid polypeptide reads, in one-letter code: MSITIDTSVDIDLPTPPQSNGSQKRNLLLAPPSVAAHEEKLRDVFSTFDRSSTDLQMLDRLSAGFVSLPPNTYDLVLVLTDAQSDEAVRLLTRDVYTALVPAMKAGARLQLQQGSLGASEGLEAILAGLVEKDGGFEKPVQEAAVPLKLGGRKKKDKTNGVNGVQNGVATNGASTNGVGMFDPAQNNDDELIDEDALLSDDDLKRPLPRPQNCVPETAKKRRRPCKDCTCGLASQLEEEDRAREAKAAQDLNILKLNTDDLNDELDFTVQGKTSSCNSCSLGDAFRCSSCPYIGLPPFKPGEEVKIMNDMVQL.

Disordered stretches follow at residues Met-1–Arg-25 and Gly-151–Asn-187. The tract at residues Asn-20–Val-145 is N-terminal SAM-like domain. The segment at Pro-146–Leu-203 is linker. A compositionally biased stretch (polar residues) spans Asn-159–Gly-177. 4 residues coordinate [2Fe-2S] cluster: Cys-213, Cys-225, Cys-228, and Cys-230. The tract at residues Cys-213 to Cys-230 is fe-S binding site A. Residues Cys-276, Cys-279, Cys-287, and Cys-290 each coordinate [4Fe-4S] cluster. 2 consecutive short sequence motifs (cx2C motif) follow at residues Cys-276–Cys-279 and Cys-287–Cys-290. The segment at Cys-276 to Cys-290 is fe-S binding site B.

It belongs to the anamorsin family. As to quaternary structure, monomer. Interacts with tah18. Interacts with mia40. It depends on [2Fe-2S] cluster as a cofactor. [4Fe-4S] cluster serves as cofactor.

The protein resides in the cytoplasm. It is found in the mitochondrion intermembrane space. Its function is as follows. Component of the cytosolic iron-sulfur (Fe-S) protein assembly (CIA) machinery required for the maturation of extramitochondrial Fe-S proteins. Part of an electron transfer chain functioning in an early step of cytosolic Fe-S biogenesis, facilitating the de novo assembly of a [4Fe-4S] cluster on the scaffold complex cfd1-nbp35. Electrons are transferred to dre2 from NADPH via the FAD- and FMN-containing protein tah18. Tah18-dre2 are also required for the assembly of the diferric tyrosyl radical cofactor of ribonucleotide reductase (RNR), probably by providing electrons for reduction during radical cofactor maturation in the catalytic small subunit rnr2. The chain is Fe-S cluster assembly protein dre2 from Aspergillus flavus (strain ATCC 200026 / FGSC A1120 / IAM 13836 / NRRL 3357 / JCM 12722 / SRRC 167).